The primary structure comprises 275 residues: Glucosamine-6-phosphate deaminase 2 (275 aa).

Asp72 (proton acceptor; for enolization step) is an active-site residue. Positions 103–131 (NAHILDGNASDLQAECEDFERKIKEAGGI) form a coiled coil. Catalysis depends on Asp141, which acts as the For ring-opening step. The Proton acceptor; for ring-opening step role is filled by His143. The active-site For ring-opening step is the Glu148.

This sequence belongs to the glucosamine/galactosamine-6-phosphate isomerase family. As to quaternary structure, homohexamer.

The protein localises to the cytoplasm. It catalyses the reaction alpha-D-glucosamine 6-phosphate + H2O = beta-D-fructose 6-phosphate + NH4(+). Functionally, catalyzes the reversible conversion of alpha-D-glucosamine 6-phosphate (GlcN-6P) into beta-D-fructose 6-phosphate (Fru-6P) and ammonium ion, a regulatory reaction step in de novo uridine diphosphate-N-acetyl-alpha-D-glucosamine (UDP-GlcNAc) biosynthesis via hexosamine pathway. In Xenopus tropicalis (Western clawed frog), this protein is Glucosamine-6-phosphate deaminase 2.